The sequence spans 250 residues: N-acyl homoserine lactonase (250 aa).

Zn(2+) contacts are provided by histidine 104, histidine 106, aspartate 108, histidine 109, histidine 169, aspartate 191, and histidine 235.

It belongs to the metallo-beta-lactamase superfamily. In terms of assembly, monomer. The cofactor is Zn(2+).

The catalysed reaction is an N-acyl-L-homoserine lactone + H2O = an N-acyl-L-homoserine + H(+). Completely inhibited by Cu(2+) and Ag(+). Partially inhibited by Cr(2+), Pb(2+) and Fe(2+). Mg(2+), Ca(2+), Mn(2+), Co(2+), Ni(2+), Zn(2+) and Cd(2+) have no effect on activity. The chelating agents EDTA, 2,2'bipyridine and o-phenanthroline have no effect on enzyme activity. Hydrolyzes acyl homoserine lactones with varying lengths of acyl chains, with a slight preference for substrates without 3-oxo substitution at the C3 position. Has only residual activity towards non-acyl lactones, and no activity towards non-cyclic esters. In Bacillus sp, this protein is N-acyl homoserine lactonase.